The sequence spans 517 residues: Crotonobetaine/carnitine--CoA ligase (517 aa).

This sequence belongs to the ATP-dependent AMP-binding enzyme family.

The catalysed reaction is 4-(trimethylamino)butanoate + ATP + CoA = 4-(trimethylamino)butanoyl-CoA + AMP + diphosphate. The enzyme catalyses crotonobetaine + ATP + CoA = crotonobetainyl-CoA + AMP + diphosphate. It catalyses the reaction (R)-carnitine + ATP + CoA = (R)-carnitinyl-CoA + AMP + diphosphate. It participates in amine and polyamine metabolism; carnitine metabolism. Catalyzes the transfer of CoA to carnitine, generating the initial carnitinyl-CoA needed for the CaiB reaction cycle. Also has activity toward crotonobetaine and gamma-butyrobetaine. In Salmonella paratyphi C (strain RKS4594), this protein is Crotonobetaine/carnitine--CoA ligase.